Reading from the N-terminus, the 344-residue chain is Dihydroorotase (344 aa).

His-14 and His-16 together coordinate Zn(2+). Substrate contacts are provided by residues 16–18 and Asn-42; that span reads HFR. Zn(2+) is bound by residues Lys-100, His-137, and His-175. Lys-100 is subject to N6-carboxylysine. A substrate-binding site is contributed by His-137. Leu-220 contacts substrate. Zn(2+) is bound at residue Asp-248. Residue Asp-248 is part of the active site. Substrate-binding residues include His-252 and Ala-264.

It belongs to the metallo-dependent hydrolases superfamily. DHOase family. Class II DHOase subfamily. Homodimer. The cofactor is Zn(2+).

The catalysed reaction is (S)-dihydroorotate + H2O = N-carbamoyl-L-aspartate + H(+). Its pathway is pyrimidine metabolism; UMP biosynthesis via de novo pathway; (S)-dihydroorotate from bicarbonate: step 3/3. In terms of biological role, catalyzes the reversible cyclization of carbamoyl aspartate to dihydroorotate. The polypeptide is Dihydroorotase (Alcanivorax borkumensis (strain ATCC 700651 / DSM 11573 / NCIMB 13689 / SK2)).